The following is a 277-amino-acid chain: Phosphatidylglycerol--prolipoprotein diacylglyceryl transferase (277 aa).

A run of 4 helical transmembrane segments spans residues 11–31 (IIFS…LISF), 55–75 (LLYI…IIFY), 93–113 (GGMS…YLSL), and 117–137 (VKIL…LGAG). Residue arginine 138 participates in a 1,2-diacyl-sn-glycero-3-phospho-(1'-sn-glycerol) binding. A run of 3 helical transmembrane segments spans residues 192-212 (PSQL…IYFF), 220-240 (GSIS…SEFF), and 256-276 (MGQI…NLFI).

This sequence belongs to the Lgt family.

The protein localises to the cell inner membrane. It carries out the reaction L-cysteinyl-[prolipoprotein] + a 1,2-diacyl-sn-glycero-3-phospho-(1'-sn-glycerol) = an S-1,2-diacyl-sn-glyceryl-L-cysteinyl-[prolipoprotein] + sn-glycerol 1-phosphate + H(+). It participates in protein modification; lipoprotein biosynthesis (diacylglyceryl transfer). Its function is as follows. Catalyzes the transfer of the diacylglyceryl group from phosphatidylglycerol to the sulfhydryl group of the N-terminal cysteine of a prolipoprotein, the first step in the formation of mature lipoproteins. The polypeptide is Phosphatidylglycerol--prolipoprotein diacylglyceryl transferase (Buchnera aphidicola subsp. Schizaphis graminum (strain Sg)).